The primary structure comprises 426 residues: Methylamine dehydrogenase heavy chain (426 aa).

The signal sequence occupies residues 1–31 (MASARESTPRYLTLIGATLACSALALGAAQA). The disordered stretch occupies residues 32 to 64 (QTEPAEPEAPAETAAADAAGQTEGQRGAAEAAA). A disulfide bridge links Cys-221 with Cys-236.

It belongs to the aromatic amine dehydrogenase heavy chain family. As to quaternary structure, tetramer of two light and two heavy chains.

It localises to the periplasm. It catalyses the reaction 2 oxidized [amicyanin] + methylamine + H2O = 2 reduced [amicyanin] + formaldehyde + NH4(+) + 2 H(+). In terms of biological role, methylamine dehydrogenase carries out the oxidation of methylamine. Electrons are passed from methylamine dehydrogenase to amicyanin. In Paracoccus versutus (Thiobacillus versutus), this protein is Methylamine dehydrogenase heavy chain (mauB).